Here is a 305-residue protein sequence, read N- to C-terminus: Porphobilinogen deaminase (305 aa).

Position 241 is an S-(dipyrrolylmethanemethyl)cysteine (C241).

It belongs to the HMBS family. In terms of assembly, monomer. Dipyrromethane serves as cofactor.

The enzyme catalyses 4 porphobilinogen + H2O = hydroxymethylbilane + 4 NH4(+). It functions in the pathway porphyrin-containing compound metabolism; protoporphyrin-IX biosynthesis; coproporphyrinogen-III from 5-aminolevulinate: step 2/4. In terms of biological role, tetrapolymerization of the monopyrrole PBG into the hydroxymethylbilane pre-uroporphyrinogen in several discrete steps. The chain is Porphobilinogen deaminase from Exiguobacterium sp. (strain ATCC BAA-1283 / AT1b).